Reading from the N-terminus, the 208-residue chain is MTDQTIVKMNAELRNSVGTGPSRTLRRNGAIPAVVYGKHRSPLSIYLSDREFLSKYRSAALSTHLIELEIGEKKEYVLMRDIQKHPVTDRIQHVDFQFIDHGTEIKIEVPLVFVNEQRCVGVKKGGVLNILHRTLHIKCLPNAILQSIEVDLANLTIGHSIHVSDLNLPSEVTVVMKEHNPTLVTISGTSSDQDTSGGESSGTTTSED.

Residues 184–208 (VTISGTSSDQDTSGGESSGTTTSED) form a disordered region. A compositionally biased stretch (low complexity) spans 187–208 (SGTSSDQDTSGGESSGTTTSED).

This sequence belongs to the bacterial ribosomal protein bL25 family. CTC subfamily. As to quaternary structure, part of the 50S ribosomal subunit; part of the 5S rRNA/L5/L18/L25 subcomplex. Contacts the 5S rRNA. Binds to the 5S rRNA independently of L5 and L18.

Its function is as follows. This is one of the proteins that binds to the 5S RNA in the ribosome where it forms part of the central protuberance. This Ehrlichia ruminantium (strain Gardel) protein is Large ribosomal subunit protein bL25.